The chain runs to 482 residues: Transcription termination/antitermination protein NusA (482 aa).

An S1 motif domain is found at 133–197 (NKVVIGYVQQ…NGIEVILSRT (65 aa)). One can recognise a KH domain in the interval 300 to 446 (LHKALVVVSD…NDNDESMEKV (147 aa)).

The protein belongs to the NusA family. Monomer. Binds directly to the core enzyme of the DNA-dependent RNA polymerase and to nascent RNA.

The protein localises to the cytoplasm. Participates in both transcription termination and antitermination. The chain is Transcription termination/antitermination protein NusA from Borreliella burgdorferi (strain ATCC 35210 / DSM 4680 / CIP 102532 / B31) (Borrelia burgdorferi).